Here is a 685-residue protein sequence, read N- to C-terminus: Putative alpha-1,3-mannosyltransferase MNN14 (685 aa).

The Cytoplasmic portion of the chain corresponds to 1–13 (MGLLSIPYQSKSK). A helical membrane pass occupies residues 14–34 (LWIAIFLVVWSLISMHFIWQS). The Lumenal portion of the chain corresponds to 35–685 (QANSGLILKN…EIWMRGYNYL (651 aa)). N-linked (GlcNAc...) asparagine glycans are attached at residues asparagine 199, asparagine 338, asparagine 408, and asparagine 556.

It belongs to the MNN1/MNT family.

The protein resides in the golgi apparatus membrane. The protein operates within protein modification; protein glycosylation. Functionally, responsible for addition of the terminal mannose residues to the outer chain of core N-linked polysaccharides and to O-linked mannotriose. Implicated in late Golgi modifications. Involved in virulence. The polypeptide is Putative alpha-1,3-mannosyltransferase MNN14 (MNN14) (Candida albicans (strain SC5314 / ATCC MYA-2876) (Yeast)).